Here is a 430-residue protein sequence, read N- to C-terminus: Probable folylpolyglutamate synthase (430 aa).

Residue 37–40 participates in ATP binding; that stretch reads GKET. Glu-132 provides a ligand contact to Mg(2+). Asp-300 provides a ligand contact to ATP.

It belongs to the folylpolyglutamate synthase family.

It is found in the mitochondrion. The enzyme catalyses (6S)-5,6,7,8-tetrahydrofolyl-(gamma-L-Glu)(n) + L-glutamate + ATP = (6S)-5,6,7,8-tetrahydrofolyl-(gamma-L-Glu)(n+1) + ADP + phosphate + H(+). It functions in the pathway cofactor biosynthesis; tetrahydrofolylpolyglutamate biosynthesis. In terms of biological role, conversion of folates to polyglutamate derivatives. The chain is Probable folylpolyglutamate synthase (RMA1) from Saccharomyces cerevisiae (strain ATCC 204508 / S288c) (Baker's yeast).